We begin with the raw amino-acid sequence, 206 residues long: Macrophage immunometabolism regulator (206 aa).

Belongs to the UNC119-binding protein family. As to quaternary structure, interacts with unc119 family proteins; interaction preferentially takes place when unc119 proteins are unliganded with myristoylated proteins.

The protein resides in the cytoplasm. It localises to the cell projection. The protein localises to the cilium. In terms of biological role, may play a role in immune regulation through regulation of the macrophage function. Involved in the recruitment of macrophages in response to injury. May also play a role in trafficking of proteins via its interaction with unc119 family cargo adapters. May play a role in ciliary membrane localization. Its function is as follows. Regulates the macrophage function, by enhancing the resolution of inflammation and wound repair functions mediated by M2 macrophages. The regulation of macrophage function is, due at least in part, to the role of C5orf30 in regulating ability to inhibit glycolysis. Probably plays alaso a role in trafficking of proteins via its interaction with UNC119 and UNC119B cargo adapters: may help the release of UNC119 and UNC119B cargo or the recycling of UNC119 and UNC119B. May play a role in ciliary membrane localization via its interaction with UNC119B and protein transport into photoreceptor cells. This is Macrophage immunometabolism regulator (macir) from Danio rerio (Zebrafish).